A 165-amino-acid chain; its full sequence is Phosphopantetheine adenylyltransferase (165 aa).

Residue S10 participates in substrate binding. ATP is bound by residues 10 to 11 and H18; that span reads SF. K42, L74, and R88 together coordinate substrate. ATP contacts are provided by residues 89–91, E99, and 124–130; these read GLR and YSFISSS.

The protein belongs to the bacterial CoaD family. In terms of assembly, homohexamer. Mg(2+) serves as cofactor.

The protein localises to the cytoplasm. The enzyme catalyses (R)-4'-phosphopantetheine + ATP + H(+) = 3'-dephospho-CoA + diphosphate. It functions in the pathway cofactor biosynthesis; coenzyme A biosynthesis; CoA from (R)-pantothenate: step 4/5. Its function is as follows. Reversibly transfers an adenylyl group from ATP to 4'-phosphopantetheine, yielding dephospho-CoA (dPCoA) and pyrophosphate. The polypeptide is Phosphopantetheine adenylyltransferase (Macrococcus caseolyticus (strain JCSC5402) (Macrococcoides caseolyticum)).